A 378-amino-acid chain; its full sequence is Cytochrome b (378 aa).

The next 4 helical transmembrane spans lie at 34 to 54 (FGSL…FLSM), 78 to 100 (WLLR…CHIG), 113 to 133 (TWNV…VGYV), and 179 to 199 (FFSF…VHLL). Residues histidine 84 and histidine 98 each contribute to the heme b site. Heme b-binding residues include histidine 183 and histidine 197. An a ubiquinone-binding site is contributed by histidine 202. Transmembrane regions (helical) follow at residues 225 to 245 (YSTK…IVVL), 289 to 306 (LGGV…FCLP), 313 to 342 (KFRS…WIGM), and 350 to 369 (IFIG…LNPL).

The protein belongs to the cytochrome b family. In terms of assembly, the main subunits of complex b-c1 are: cytochrome b, cytochrome c1 and the Rieske protein. It depends on heme b as a cofactor.

It is found in the mitochondrion inner membrane. Component of the ubiquinol-cytochrome c reductase complex (complex III or cytochrome b-c1 complex) that is part of the mitochondrial respiratory chain. The b-c1 complex mediates electron transfer from ubiquinol to cytochrome c. Contributes to the generation of a proton gradient across the mitochondrial membrane that is then used for ATP synthesis. The chain is Cytochrome b (mt:Cyt-b) from Loxocorone allax (Goblet worm).